The primary structure comprises 275 residues: Phosphonoacetaldehyde hydrolase (275 aa).

The active-site Nucleophile is D15. Residues D15 and A17 each coordinate Mg(2+). The active-site Schiff-base intermediate with substrate is the K56. D189 provides a ligand contact to Mg(2+).

It belongs to the HAD-like hydrolase superfamily. PhnX family. As to quaternary structure, homodimer. The cofactor is Mg(2+).

It catalyses the reaction phosphonoacetaldehyde + H2O = acetaldehyde + phosphate + H(+). Its activity is regulated as follows. Inhibited by phosphite, moderately inhibited by phosphonic acids, the corresponding aminophosphonic acids activate the enzyme. Involved in phosphonate degradation. This chain is Phosphonoacetaldehyde hydrolase, found in Pseudomonas aeruginosa (strain ATCC 15692 / DSM 22644 / CIP 104116 / JCM 14847 / LMG 12228 / 1C / PRS 101 / PAO1).